The following is a 316-amino-acid chain: Pantothenate kinase (316 aa).

95–102 (GSVAVGKS) provides a ligand contact to ATP.

Belongs to the prokaryotic pantothenate kinase family.

Its subcellular location is the cytoplasm. It catalyses the reaction (R)-pantothenate + ATP = (R)-4'-phosphopantothenate + ADP + H(+). The protein operates within cofactor biosynthesis; coenzyme A biosynthesis; CoA from (R)-pantothenate: step 1/5. This is Pantothenate kinase from Shewanella sp. (strain MR-4).